Consider the following 162-residue polypeptide: Zinc finger protein 593 homolog (162 aa).

The C2H2-type zinc finger occupies 59–83 (FYCVHCAKYFIDDTAMQAHFRTKVH). The segment at 110–162 (VKPKKRAMETQPSKEDVVAGKRIRVEVVPEDTDATDSPSTSKTKRKKVEKMET) is disordered. Residues 115–136 (RAMETQPSKEDVVAGKRIRVEV) are compositionally biased toward basic and acidic residues. Positions 151 to 162 (KTKRKKVEKMET) are enriched in basic residues.

This sequence belongs to the ZNF593/BUD20 C2H2-type zinc-finger protein family. Associates with pre-60S ribosomal particles; released from the pre-60S particle very early in the cytoplasm.

The protein resides in the nucleus. The protein localises to the cytoplasm. Functionally, involved in pre-60S ribosomal particles maturation by promoting the nuclear export of the 60S ribosome. The polypeptide is Zinc finger protein 593 homolog (Drosophila melanogaster (Fruit fly)).